The sequence spans 201 residues: Potassium-transporting ATPase KdpC subunit (201 aa).

Residues 7-29 traverse the membrane as a helical segment; the sequence is PALVLLTALTAITGLAYPLAMTG.

This sequence belongs to the KdpC family. The system is composed of three essential subunits: KdpA, KdpB and KdpC.

Its subcellular location is the cell inner membrane. In terms of biological role, part of the high-affinity ATP-driven potassium transport (or Kdp) system, which catalyzes the hydrolysis of ATP coupled with the electrogenic transport of potassium into the cytoplasm. This subunit acts as a catalytic chaperone that increases the ATP-binding affinity of the ATP-hydrolyzing subunit KdpB by the formation of a transient KdpB/KdpC/ATP ternary complex. The protein is Potassium-transporting ATPase KdpC subunit of Methylobacterium radiotolerans (strain ATCC 27329 / DSM 1819 / JCM 2831 / NBRC 15690 / NCIMB 10815 / 0-1).